Here is a 128-residue protein sequence, read N- to C-terminus: Large ribosomal subunit protein bL12 (128 aa).

Belongs to the bacterial ribosomal protein bL12 family. As to quaternary structure, homodimer. Part of the ribosomal stalk of the 50S ribosomal subunit. Forms a multimeric L10(L12)X complex, where L10 forms an elongated spine to which 2 to 4 L12 dimers bind in a sequential fashion. Binds GTP-bound translation factors.

Its function is as follows. Forms part of the ribosomal stalk which helps the ribosome interact with GTP-bound translation factors. Is thus essential for accurate translation. The polypeptide is Large ribosomal subunit protein bL12 (Thermosipho africanus (strain TCF52B)).